The following is a 615-amino-acid chain: 1-deoxy-D-xylulose-5-phosphate synthase (615 aa).

Thiamine diphosphate contacts are provided by residues histidine 77 and 118–120 (GHS). Aspartate 149 contacts Mg(2+). Thiamine diphosphate-binding positions include 150–151 (GA), asparagine 178, tyrosine 286, and glutamate 367. Asparagine 178 is a binding site for Mg(2+).

This sequence belongs to the transketolase family. DXPS subfamily. Homodimer. Requires Mg(2+) as cofactor. It depends on thiamine diphosphate as a cofactor.

It carries out the reaction D-glyceraldehyde 3-phosphate + pyruvate + H(+) = 1-deoxy-D-xylulose 5-phosphate + CO2. The protein operates within metabolic intermediate biosynthesis; 1-deoxy-D-xylulose 5-phosphate biosynthesis; 1-deoxy-D-xylulose 5-phosphate from D-glyceraldehyde 3-phosphate and pyruvate: step 1/1. Catalyzes the acyloin condensation reaction between C atoms 2 and 3 of pyruvate and glyceraldehyde 3-phosphate to yield 1-deoxy-D-xylulose-5-phosphate (DXP). This is 1-deoxy-D-xylulose-5-phosphate synthase from Glaesserella parasuis serovar 5 (strain SH0165) (Haemophilus parasuis).